Consider the following 452-residue polypeptide: Tubulin alpha-1D chain (452 aa).

The MREC motif motif lies at methionine 1–cysteine 4. Position 11 (glutamine 11) interacts with GTP. Position 40 is an N6-acetyllysine (lysine 40). GTP-binding residues include glutamate 71, serine 140, glycine 144, threonine 145, threonine 179, asparagine 206, and asparagine 228. Glutamate 71 lines the Mg(2+) pocket. Residue glutamate 254 is part of the active site. Residue tyrosine 282 is modified to 3'-nitrotyrosine. The segment at tyrosine 432–tyrosine 452 is disordered. Serine 439 carries the phosphoserine modification. A 5-glutamyl polyglutamate modification is found at glutamate 446. Tyrosine 452 carries the 3'-nitrotyrosine modification.

It belongs to the tubulin family. In terms of assembly, dimer of alpha and beta chains. A typical microtubule is a hollow water-filled tube with an outer diameter of 25 nm and an inner diameter of 15 nM. Alpha-beta heterodimers associate head-to-tail to form protofilaments running lengthwise along the microtubule wall with the beta-tubulin subunit facing the microtubule plus end conferring a structural polarity. Microtubules usually have 13 protofilaments but different protofilament numbers can be found in some organisms and specialized cells. The cofactor is Mg(2+). Post-translationally, some glutamate residues at the C-terminus are polyglycylated, resulting in polyglycine chains on the gamma-carboxyl group. Glycylation is mainly limited to tubulin incorporated into axonemes (cilia and flagella) whereas glutamylation is prevalent in neuronal cells, centrioles, axonemes, and the mitotic spindle. Both modifications can coexist on the same protein on adjacent residues, and lowering polyglycylation levels increases polyglutamylation, and reciprocally. Cilia and flagella glycylation is required for their stability and maintenance. Flagella glycylation controls sperm motility. Some glutamate residues at the C-terminus are polyglutamylated, resulting in polyglutamate chains on the gamma-carboxyl group. Polyglutamylation plays a key role in microtubule severing by spastin (SPAST). SPAST preferentially recognizes and acts on microtubules decorated with short polyglutamate tails: severing activity by SPAST increases as the number of glutamates per tubulin rises from one to eight, but decreases beyond this glutamylation threshold. Glutamylation is also involved in cilia motility. In terms of processing, acetylation of alpha chains at Lys-40 is located inside the microtubule lumen. This modification has been correlated with increased microtubule stability, intracellular transport and ciliary assembly. Post-translationally, methylation of alpha chains at Lys-40 is found in mitotic microtubules and is required for normal mitosis and cytokinesis contributing to genomic stability. Nitration of Tyr-452 is irreversible and interferes with normal dynein intracellular distribution. In terms of processing, undergoes a tyrosination/detyrosination cycle, the cyclic removal and re-addition of a C-terminal tyrosine residue by the enzymes tubulin tyrosine carboxypeptidase (MATCAP, VASH1 or VASH2) and tubulin tyrosine ligase (TTL), respectively. Post-translationally, tyrosination promotes microtubule interaction with CAP-Gly domain-containing proteins such as CLIP1, CLIP2 and DCTN1. Tyrosination regulates the initiation of dynein-dynactin motility via interaction with DCTN1, which brings the dynein-dynactin complex into contact with microtubules. In neurons, tyrosinated tubulins mediate the initiation of retrograde vesicle transport. Detyrosination is involved in metaphase plate congression by guiding chromosomes during mitosis: detyrosination promotes interaction with CENPE, promoting pole-proximal transport of chromosomes toward the equator. Detyrosination increases microtubules-dependent mechanotransduction in dystrophic cardiac and skeletal muscle. In cardiomyocytes, detyrosinated microtubules are required to resist to contractile compression during contraction: detyrosination promotes association with desmin (DES) at force-generating sarcomeres, leading to buckled microtubules and mechanical resistance to contraction.

The protein localises to the cytoplasm. It localises to the cytoskeleton. The enzyme catalyses GTP + H2O = GDP + phosphate + H(+). Tubulin is the major constituent of microtubules, a cylinder consisting of laterally associated linear protofilaments composed of alpha- and beta-tubulin heterodimers. Microtubules grow by the addition of GTP-tubulin dimers to the microtubule end, where a stabilizing cap forms. Below the cap, tubulin dimers are in GDP-bound state, owing to GTPase activity of alpha-tubulin. The polypeptide is Tubulin alpha-1D chain (TUBA1D) (Bos taurus (Bovine)).